An 81-amino-acid polypeptide reads, in one-letter code: ATP synthase subunit c, chloroplastic (81 aa).

Helical transmembrane passes span Pro-3–Gly-23 and Leu-57–Ala-77.

It belongs to the ATPase C chain family. In terms of assembly, F-type ATPases have 2 components, F(1) - the catalytic core - and F(0) - the membrane proton channel. F(1) has five subunits: alpha(3), beta(3), gamma(1), delta(1), epsilon(1). F(0) has four main subunits: a(1), b(1), b'(1) and c(10-14). The alpha and beta chains form an alternating ring which encloses part of the gamma chain. F(1) is attached to F(0) by a central stalk formed by the gamma and epsilon chains, while a peripheral stalk is formed by the delta, b and b' chains.

Its subcellular location is the plastid. It localises to the chloroplast thylakoid membrane. Functionally, f(1)F(0) ATP synthase produces ATP from ADP in the presence of a proton or sodium gradient. F-type ATPases consist of two structural domains, F(1) containing the extramembraneous catalytic core and F(0) containing the membrane proton channel, linked together by a central stalk and a peripheral stalk. During catalysis, ATP synthesis in the catalytic domain of F(1) is coupled via a rotary mechanism of the central stalk subunits to proton translocation. Its function is as follows. Key component of the F(0) channel; it plays a direct role in translocation across the membrane. A homomeric c-ring of between 10-14 subunits forms the central stalk rotor element with the F(1) delta and epsilon subunits. The polypeptide is ATP synthase subunit c, chloroplastic (Cicer arietinum (Chickpea)).